A 63-amino-acid chain; its full sequence is Venom peptide U-reduvitoxin-Pp19 (63 aa).

The first 23 residues, 1 to 23 (MSPYSILFVVVIALCLLPESIVG), serve as a signal peptide directing secretion. 3 disulfides stabilise this stretch: Cys-15/Cys-62, Cys-25/Cys-53, and Cys-30/Cys-61.

Hemolymph (at protein level). Also weakly expressed by the venom gland (at protein level).

Its subcellular location is the secreted. Its function is as follows. Toxin with insecticidal activity. High doses of recombinant toxin causes impaired motor behavior of D.melanogaster, which progress slowly to paralysis and death after several hours. In Pristhesancus plagipennis (Common assassin bug), this protein is Venom peptide U-reduvitoxin-Pp19.